Here is a 137-residue protein sequence, read N- to C-terminus: Large ribosomal subunit protein uL16 (137 aa).

It belongs to the universal ribosomal protein uL16 family. As to quaternary structure, part of the 50S ribosomal subunit.

Its function is as follows. Binds 23S rRNA and is also seen to make contacts with the A and possibly P site tRNAs. In Rhizobium johnstonii (strain DSM 114642 / LMG 32736 / 3841) (Rhizobium leguminosarum bv. viciae), this protein is Large ribosomal subunit protein uL16.